The sequence spans 662 residues: UvrABC system protein B (662 aa).

One can recognise a Helicase ATP-binding domain in the interval 25 to 182 (KGIEKREKFQ…KKLVEIQYER (158 aa)). 38-45 (GVTGSGKT) contributes to the ATP binding site. The Beta-hairpin motif lies at 91–114 (YYDYYQPEAYVAQSDTYIEKDASI). The 167-residue stretch at 429 to 595 (QIDDLYTSIQ…TIIKDIREVI (167 aa)) folds into the Helicase C-terminal domain. The UVR domain maps to 622-657 (DKLIEKYEEEMKEAAQNLQFEKAAHLRDVIYKLKKD).

It belongs to the UvrB family. Forms a heterotetramer with UvrA during the search for lesions. Interacts with UvrC in an incision complex.

It is found in the cytoplasm. Its function is as follows. The UvrABC repair system catalyzes the recognition and processing of DNA lesions. A damage recognition complex composed of 2 UvrA and 2 UvrB subunits scans DNA for abnormalities. Upon binding of the UvrA(2)B(2) complex to a putative damaged site, the DNA wraps around one UvrB monomer. DNA wrap is dependent on ATP binding by UvrB and probably causes local melting of the DNA helix, facilitating insertion of UvrB beta-hairpin between the DNA strands. Then UvrB probes one DNA strand for the presence of a lesion. If a lesion is found the UvrA subunits dissociate and the UvrB-DNA preincision complex is formed. This complex is subsequently bound by UvrC and the second UvrB is released. If no lesion is found, the DNA wraps around the other UvrB subunit that will check the other stand for damage. The sequence is that of UvrABC system protein B from Clostridium botulinum (strain Kyoto / Type A2).